A 216-amino-acid chain; its full sequence is MYNVIFLGAPGSGKGTQGEVVAKELKLAHMATGDLFRKAIECGDELGDTVKSYMERGELVPDEITISVVLKHLAGLKDVTGIILDGFPRSLRQAEALDEALVQQGQGIGRVIYINVPEDELVRRLSGRWVCRSCQSPYQSGCAEVTKGKCSRCQGELYQRPDDTPETVKERLKVYFSKTAPLIEYYRSKGKLSEIDGMAEISEVTKRIISAIKCGK.

An ATP-binding site is contributed by 11–16 (GSGKGT). Residues 31-60 (ATGDLFRKAIECGDELGDTVKSYMERGELV) form an NMP region. AMP is bound by residues threonine 32, arginine 37, 58-60 (ELV), 86-89 (GFPR), and glutamine 93. Positions 127–163 (GRWVCRSCQSPYQSGCAEVTKGKCSRCQGELYQRPDD) are LID. Residue arginine 128 coordinates ATP. Zn(2+) contacts are provided by cysteine 131, cysteine 134, cysteine 150, and cysteine 153. Residues arginine 160 and arginine 171 each contribute to the AMP site. Alanine 199 contributes to the ATP binding site.

This sequence belongs to the adenylate kinase family. Monomer.

Its subcellular location is the cytoplasm. The catalysed reaction is AMP + ATP = 2 ADP. Its pathway is purine metabolism; AMP biosynthesis via salvage pathway; AMP from ADP: step 1/1. Catalyzes the reversible transfer of the terminal phosphate group between ATP and AMP. Plays an important role in cellular energy homeostasis and in adenine nucleotide metabolism. The polypeptide is Adenylate kinase (Dehalococcoides mccartyi (strain ATCC BAA-2100 / JCM 16839 / KCTC 5957 / BAV1)).